A 143-amino-acid chain; its full sequence is Large ribosomal subunit protein uL11 (143 aa).

Belongs to the universal ribosomal protein uL11 family. As to quaternary structure, part of the ribosomal stalk of the 50S ribosomal subunit. Interacts with L10 and the large rRNA to form the base of the stalk. L10 forms an elongated spine to which L12 dimers bind in a sequential fashion forming a multimeric L10(L12)X complex. One or more lysine residues are methylated.

Its function is as follows. Forms part of the ribosomal stalk which helps the ribosome interact with GTP-bound translation factors. The protein is Large ribosomal subunit protein uL11 of Chromohalobacter salexigens (strain ATCC BAA-138 / DSM 3043 / CIP 106854 / NCIMB 13768 / 1H11).